Here is a 519-residue protein sequence, read N- to C-terminus: Carboxyl-terminal-processing peptidase 3, chloroplastic (519 aa).

In terms of domain architecture, PDZ spans 186–274; the sequence is YQSFRIGSDG…IKLKNVNGSG (89 aa). Residues serine 407 and lysine 432 each act as charge relay system in the active site.

This sequence belongs to the peptidase S41A family.

It localises to the plastid. The protein resides in the chloroplast thylakoid lumen. It catalyses the reaction The enzyme shows specific recognition of a C-terminal tripeptide, Xaa-Yaa-Zaa, in which Xaa is preferably Ala or Leu, Yaa is preferably Ala or Tyr, and Zaa is preferably Ala, but then cleaves at a variable distance from the C-terminus. A typical cleavage is -Ala-Ala-|-Arg-Ala-Ala-Lys-Glu-Asn-Tyr-Ala-Leu-Ala-Ala.. Its function is as follows. Protease involved in the C-terminal processing of the chloroplastic D1 protein of photosystem II. This proteolytic processing is necessary to allow the light-driven assembly of the tetranuclear manganese cluster, which is responsible for photosynthetic water oxidation. The sequence is that of Carboxyl-terminal-processing peptidase 3, chloroplastic (CTPA3) from Arabidopsis thaliana (Mouse-ear cress).